A 220-amino-acid polypeptide reads, in one-letter code: VQ motif-containing protein 5 (220 aa).

Positions 49–57 (FKSLVQQLT) match the VQ motif. 2 disordered regions span residues 61-80 (PCDRLPQNIPKHQDIRPEPI) and 131-171 (HMMA…GASS). Composition is skewed to polar residues over residues 133–150 (MAQSQPQDPTQSMPQSNG) and 157–171 (SWFNGSTQEMHGASS).

Its subcellular location is the nucleus. In terms of biological role, may function as negative regulator of plant defense. In Arabidopsis thaliana (Mouse-ear cress), this protein is VQ motif-containing protein 5.